Here is a 1056-residue protein sequence, read N- to C-terminus: Ribosomal protein S6 kinase delta-1 (1056 aa).

Positions 8–132 (SADLARFYTV…DFFKGGVISD (125 aa)) constitute a PX domain. Positions 204-223 (VGAVASDSEPSRVEDRESRS) are disordered. Over residues 212 to 222 (EPSRVEDRESR) the composition is skewed to basic and acidic residues. Positions 276–304 (VQGESSPTRREAVKRRTAEYLMRAESICS) constitute an MIT domain. 7 positions are modified to phosphoserine: S281, S422, S423, S426, S446, S448, and S454. Positions 343 to 444 (GVIDKVLLVM…SMPPRVCLQQ (102 aa)) constitute a Protein kinase 1 domain. Residues 426-504 (SLDIKEGRPS…KWLDSGSSSE (79 aa)) are disordered. Residues 443–454 (QQPSASPQGGSS) show a composition bias toward low complexity. Positions 473-482 (TSLTPSSQDD) are enriched in polar residues. 2 positions are modified to phosphoserine: S493 and S527. Residues 529 to 588 (SEESVMQPEGDKADTQAVSSPASLATGSVSPSTHLRVFSGGEDLEAVSSPPTSESLSRSK) form a disordered region. Polar residues predominate over residues 544–561 (QAVSSPASLATGSVSPST). Positions 576-587 (SSPPTSESLSRS) are enriched in low complexity. S577, S599, S602, S634, S655, S658, S661, and S787 each carry phosphoserine. Residues 628–662 (TLEDGDSPSQSLDPGESKRESEAQDSVSRGSDDSV) are disordered. The region spanning 789–1046 (RSESDRLGQV…VEDIKSHPFF (258 aa)) is the Protein kinase 2 domain. Residues 795–803 (LGQVEVVVT) and K823 each bind ATP. D919 functions as the Proton acceptor in the catalytic mechanism.

This sequence belongs to the protein kinase superfamily. Ser/Thr protein kinase family. S6 kinase subfamily. In terms of assembly, interacts with SPHK1 and phosphatidylinositol 3-phosphate. Interacts (via PX domain) with PRDX3.

The protein resides in the cytoplasm. Its subcellular location is the membrane. It localises to the early endosome. The enzyme catalyses L-seryl-[protein] + ATP = O-phospho-L-seryl-[protein] + ADP + H(+). The catalysed reaction is L-threonyl-[protein] + ATP = O-phospho-L-threonyl-[protein] + ADP + H(+). Its function is as follows. May be involved in transmitting sphingosine-1 phosphate (SPP)-mediated signaling into the cell. Plays a role in the recruitment of PRDX3 to early endosomes. This is Ribosomal protein S6 kinase delta-1 (Rps6kc1) from Mus musculus (Mouse).